The sequence spans 702 residues: Polyphosphate kinase (702 aa).

Residue Asn55 participates in ATP binding. Mg(2+) is bound by residues Arg389 and Arg419. His449 functions as the Phosphohistidine intermediate in the catalytic mechanism. Positions 482, 578, and 606 each coordinate ATP.

It belongs to the polyphosphate kinase 1 (PPK1) family. Mg(2+) serves as cofactor. In terms of processing, an intermediate of this reaction is the autophosphorylated ppk in which a phosphate is covalently linked to a histidine residue through a N-P bond.

The enzyme catalyses [phosphate](n) + ATP = [phosphate](n+1) + ADP. Functionally, catalyzes the reversible transfer of the terminal phosphate of ATP to form a long-chain polyphosphate (polyP). This Bacillus anthracis protein is Polyphosphate kinase.